We begin with the raw amino-acid sequence, 361 residues long: Protein Wnt-2 (361 aa).

Positions 1–27 are cleaved as a signal peptide; the sequence is MNASVLGLCLSGPLVLLLAWLAPPVTS. 11 disulfide bridges follow: C77–C88, C128–C136, C138–C158, C207–C221, C209–C216, C279–C310, C295–C305, C309–C349, C325–C340, C327–C337, and C332–C333. A lipid anchor (O-palmitoleoyl serine; by PORCN) is attached at S213. Residue N296 is glycosylated (N-linked (GlcNAc...) asparagine).

The protein belongs to the Wnt family. Palmitoleoylation is required for efficient binding to frizzled receptors. Depalmitoleoylation leads to Wnt signaling pathway inhibition.

Its subcellular location is the secreted. The protein localises to the extracellular space. The protein resides in the extracellular matrix. Ligand for members of the frizzled family of seven transmembrane receptors. Probable developmental protein. May be a signaling molecule which affects the development of discrete regions of tissues. Is likely to signal over only few cell diameters. In Ornithorhynchus anatinus (Duckbill platypus), this protein is Protein Wnt-2 (WNT2).